Consider the following 166-residue polypeptide: Large ribosomal subunit protein uL10 (166 aa).

Belongs to the universal ribosomal protein uL10 family. As to quaternary structure, part of the ribosomal stalk of the 50S ribosomal subunit. The N-terminus interacts with L11 and the large rRNA to form the base of the stalk. The C-terminus forms an elongated spine to which L12 dimers bind in a sequential fashion forming a multimeric L10(L12)X complex.

Functionally, forms part of the ribosomal stalk, playing a central role in the interaction of the ribosome with GTP-bound translation factors. This Streptococcus pyogenes serotype M28 (strain MGAS6180) protein is Large ribosomal subunit protein uL10.